The chain runs to 400 residues: Large envelope protein (400 aa).

M1 is subject to N-acetylmethionine. G2 is lipidated: N-myristoyl glycine; by host. The tract at residues 2-119 (GAPLSTTRRG…PPLRDTHPQA (118 aa)) is pre-S1. Residues 2-174 (GAPLSTTRRG…FLKTGGPATN (173 aa)) form a pre-S region. Residues 2 to 181 (GAPLSTTRRG…ATNMDNITSG (180 aa)) lie on the Virion surface; in external conformation side of the membrane. Residues 2-253 (GAPLSTTRRG…PGYRWMCLRR (252 aa)) lie on the Intravirion; in internal conformation side of the membrane. Residue P4 is glycosylated (N-linked (GlcNAc...) asparagine). The disordered stretch occupies residues 84-114 (VLTTLPADPPPASTNRRSGRKPTPVSPPLRD). Positions 120–174 (MQWNSTQFHQALLDPRVRALYFPAGGSSSETQNPAPTIASLTSSIFLKTGGPATN) are pre-S2. The helical transmembrane segment at 182–202 (LLGPLLVLQAVCFLLTKILTI) threads the bilayer. Over 203-253 (PQSLDSWWTSLNFLGGTPGCPGQNSQSPTSNHLPTSCPPTCPGYRWMCLRR) the chain is Intravirion; in external conformation. A helical transmembrane segment spans residues 254–274 (FIIFLFILLLCLIFLLVLVDY). Residues 275-348 (QGMLPVCPPL…WASARFSWLS (74 aa)) are Virion surface-facing. The N-linked (GlcNAc...) asparagine; by host glycan is linked to N320. A helical transmembrane segment spans residues 349-369 (LLVQFVQWCVGLSPTVWLLVI). At 370-375 (WMIWYW) the chain is on the intravirion side. The helical transmembrane segment at 376 to 398 (GPNLCSILSPFIPLLPIFCYLWV) threads the bilayer. Topologically, residues 399-400 (SI) are virion surface.

This sequence belongs to the orthohepadnavirus major surface antigen family. In its internal form (Li-HBsAg), interacts with the capsid protein and with the isoform S. Interacts with host chaperone CANX. In terms of assembly, associates with host chaperone CANX through its pre-S2 N glycan; this association may be essential for isoform M proper secretion. As to quaternary structure, interacts with isoform L. Interacts with the antigens of satellite virus HDV (HDVAgs); this interaction is required for encapsidation of HDV genomic RNA. Post-translationally, isoform M is N-terminally acetylated by host at a ratio of 90%, and N-glycosylated by host at the pre-S2 region. Myristoylated.

Its subcellular location is the virion membrane. Its function is as follows. The large envelope protein exists in two topological conformations, one which is termed 'external' or Le-HBsAg and the other 'internal' or Li-HBsAg. In its external conformation the protein attaches the virus to cell receptors and thereby initiating infection. This interaction determines the species specificity and liver tropism. This attachment induces virion internalization predominantly through caveolin-mediated endocytosis. The large envelope protein also assures fusion between virion membrane and endosomal membrane. In its internal conformation the protein plays a role in virion morphogenesis and mediates the contact with the nucleocapsid like a matrix protein. The middle envelope protein plays an important role in the budding of the virion. It is involved in the induction of budding in a nucleocapsid independent way. In this process the majority of envelope proteins bud to form subviral lipoprotein particles of 22 nm of diameter that do not contain a nucleocapsid. The chain is Large envelope protein from Homo sapiens (Human).